Here is a 481-residue protein sequence, read N- to C-terminus: Sucrose phosphorylase (481 aa).

Residues Asp-49, His-87, 191 to 193 (RLD), Glu-234, 291 to 292 (HD), 335 to 338 (DIYQ), and Arg-392 each bind sucrose. Asp-193 serves as the catalytic Nucleophile. Glu-234 serves as the catalytic Proton donor.

Belongs to the glycosyl hydrolase 13 family. Sucrose phosphorylase subfamily.

Its subcellular location is the cytoplasm. The catalysed reaction is sucrose + phosphate = D-fructose + alpha-D-glucose 1-phosphate. Intracellular catabolism of sucrose. Being intracellular, probably not involved in synthesis of extracellular polysaccharides. The sequence is that of Sucrose phosphorylase from Streptococcus mutans serotype c (strain ATCC 700610 / UA159).